Consider the following 474-residue polypeptide: ATP synthase subunit beta (474 aa).

152–159 (GGAGVGKT) contributes to the ATP binding site.

The protein belongs to the ATPase alpha/beta chains family. F-type ATPases have 2 components, CF(1) - the catalytic core - and CF(0) - the membrane proton channel. CF(1) has five subunits: alpha(3), beta(3), gamma(1), delta(1), epsilon(1). CF(0) has three main subunits: a(1), b(2) and c(9-12). The alpha and beta chains form an alternating ring which encloses part of the gamma chain. CF(1) is attached to CF(0) by a central stalk formed by the gamma and epsilon chains, while a peripheral stalk is formed by the delta and b chains.

Its subcellular location is the cell inner membrane. The enzyme catalyses ATP + H2O + 4 H(+)(in) = ADP + phosphate + 5 H(+)(out). Its function is as follows. Produces ATP from ADP in the presence of a proton gradient across the membrane. The catalytic sites are hosted primarily by the beta subunits. In Magnetococcus marinus (strain ATCC BAA-1437 / JCM 17883 / MC-1), this protein is ATP synthase subunit beta.